A 468-amino-acid chain; its full sequence is Na(+)/H(+) antiporter NhaA (468 aa).

12 helical membrane passes run 28 to 48 (FLHV…IALV), 79 to 99 (LHFW…GMEI), 115 to 135 (ALPL…YLAF), 143 to 163 (AGWA…LALL), 173 to 193 (IFLL…IAFF), 196 to 216 (GGLD…VLGL), 219 to 239 (IGIG…TGLL), 240 to 260 (MTGA…PVVP), 317 to 337 (ALHP…NAGV), 356 to 376 (VAGA…WLLV), 392 to 412 (IVLI…IAML), and 426 to 446 (LGVL…GAIY).

The protein belongs to the NhaA Na(+)/H(+) (TC 2.A.33) antiporter family.

The protein resides in the cell inner membrane. The enzyme catalyses Na(+)(in) + 2 H(+)(out) = Na(+)(out) + 2 H(+)(in). Its function is as follows. Na(+)/H(+) antiporter that extrudes sodium in exchange for external protons. This chain is Na(+)/H(+) antiporter NhaA, found in Bordetella petrii (strain ATCC BAA-461 / DSM 12804 / CCUG 43448).